The chain runs to 127 residues: Insulin-like growth factor 3.L (127 aa).

An N-terminal signal peptide occupies residues 1-49 (MPVTAMCLQDSKKLKKAKLTRKKVTPFPFSRMVLCLSLVFTLYVEATNA). The segment at 49–80 (ARCLRPRSKELLCGSELVDILQFICGPTGFYV) is b. 3 disulfide bridges follow: C61–C99, C73–C112, and C98–C103. The segment at 81-92 (SKGASFRNRNRP) is c. The a stretch occupies residues 93–113 (GIVEECCFCGCSVAILESYCA). The segment at 114–121 (APVTNFTG) is d. Residues 122–127 (REEQKS) constitute a propeptide, e peptide.

The protein belongs to the insulin family.

It localises to the secreted. Functionally, the insulin-like growth factors, isolated from plasma, are structurally and functionally related to insulin but have a much higher growth-promoting activity. Promotes anterior neural development. In Xenopus laevis (African clawed frog), this protein is Insulin-like growth factor 3.L.